A 186-amino-acid chain; its full sequence is Peptidyl-tRNA hydrolase (186 aa).

Tyr-17 serves as a coordination point for tRNA. His-22 acts as the Proton acceptor in catalysis. Tyr-64 and Asn-66 together coordinate tRNA.

Belongs to the PTH family. As to quaternary structure, monomer.

It localises to the cytoplasm. The catalysed reaction is an N-acyl-L-alpha-aminoacyl-tRNA + H2O = an N-acyl-L-amino acid + a tRNA + H(+). Hydrolyzes ribosome-free peptidyl-tRNAs (with 1 or more amino acids incorporated), which drop off the ribosome during protein synthesis, or as a result of ribosome stalling. Functionally, catalyzes the release of premature peptidyl moieties from peptidyl-tRNA molecules trapped in stalled 50S ribosomal subunits, and thus maintains levels of free tRNAs and 50S ribosomes. This chain is Peptidyl-tRNA hydrolase, found in Methylacidiphilum infernorum (isolate V4) (Methylokorus infernorum (strain V4)).